The following is a 298-amino-acid chain: Syntaxin-4 (298 aa).

Residues M1–V274 are Cytoplasmic-facing. Residues S15, S29, S36, S117, S208, and S248 each carry the phosphoserine modification. Residues D38–T163 are a coiled coil. Positions E154–G298 are interaction with CENPF. The t-SNARE coiled-coil homology domain maps to L200–A262. The helical; Anchor for type IV membrane protein transmembrane segment at M275–I295 threads the bilayer. Topologically, residues T296 to G298 are extracellular.

The protein belongs to the syntaxin family. Interacts with STXBP6. Component of the SNARE complex composed of STX4, SNAP23 and VAMP7 that interacts with SYT7 during lysosomal exocytosis. Found in a complex with VAMP8 and SNAP23. Detected in a complex with SNAP23 and STXBP4. Interacts with VAMP2. Interacts with SNAP23 and SNAPIN. Interacts with LLGL1. Interacts (via C-terminus) with CENPF. Interacts with DOC2B. Interacts with STXBP3; excludes interaction with DOC2B and SNAP25. Interacts with STXBP4; excludes interaction with VAMP2. Interacts with STXBP5L. In terms of tissue distribution, expressed in the outer and inner hair cells of the cochlea.

It localises to the cell membrane. It is found in the cell projection. The protein localises to the neuron projection. The protein resides in the stereocilium. Functionally, plasma membrane t-SNARE that mediates docking of transport vesicles. Necessary for the translocation of SLC2A4 from intracellular vesicles to the plasma membrane. In neurons, recruited at neurite tips to membrane domains rich in the phospholipid 1-oleoyl-2-palmitoyl-PC (OPPC) which promotes neurite tip surface expression of the dopamine transporter SLC6A3/DAT by facilitating fusion of SLC6A3-containing transport vesicles with the plasma membrane. Together with STXB3 and VAMP2, may also play a role in docking/fusion of intracellular GLUT4-containing vesicles with the cell surface in adipocytes and in docking of synaptic vesicles at presynaptic active zones. Required for normal hearing. The sequence is that of Syntaxin-4 (Stx4) from Mus musculus (Mouse).